The chain runs to 253 residues: MIRVSVVGAKGRMGSHVVEAVRAADDTELALALDAGDDLTQITPQNTDVVVEFTVPAVSLNNVLTLVRQGVNVVVGTTGWTDEKLDQVRAALAETETIDGRKQSVFIAPNFAISAVLADVFARIAAPYFESAEVIELHHPDKVDAPSGTAIHTAHAIADARKAAGLGEMPDNTQTDDGSRGAVIDGVHVHAVRLRGLNAHEEVLLGNAGEQLVIRADSFDRISFMPGVLLAVRKVDSGEFPGLTVGLDQFLDL.

NAD(+)-binding positions include 8-13 (GAKGRM), Asp34, 76-78 (GTT), and 108-111 (APNF). His138 serves as the catalytic Proton donor/acceptor. His139 provides a ligand contact to (S)-2,3,4,5-tetrahydrodipicolinate. The active-site Proton donor is Lys142. A (S)-2,3,4,5-tetrahydrodipicolinate-binding site is contributed by 148–149 (GT).

It belongs to the DapB family.

It localises to the cytoplasm. It carries out the reaction (S)-2,3,4,5-tetrahydrodipicolinate + NAD(+) + H2O = (2S,4S)-4-hydroxy-2,3,4,5-tetrahydrodipicolinate + NADH + H(+). It catalyses the reaction (S)-2,3,4,5-tetrahydrodipicolinate + NADP(+) + H2O = (2S,4S)-4-hydroxy-2,3,4,5-tetrahydrodipicolinate + NADPH + H(+). It participates in amino-acid biosynthesis; L-lysine biosynthesis via DAP pathway; (S)-tetrahydrodipicolinate from L-aspartate: step 4/4. Its function is as follows. Catalyzes the conversion of 4-hydroxy-tetrahydrodipicolinate (HTPA) to tetrahydrodipicolinate. This Bifidobacterium animalis subsp. lactis (strain AD011) protein is 4-hydroxy-tetrahydrodipicolinate reductase.